A 219-amino-acid chain; its full sequence is Translation initiation factor IF-3 (219 aa).

This sequence belongs to the IF-3 family. In terms of assembly, monomer.

Its subcellular location is the cytoplasm. Functionally, IF-3 binds to the 30S ribosomal subunit and shifts the equilibrium between 70S ribosomes and their 50S and 30S subunits in favor of the free subunits, thus enhancing the availability of 30S subunits on which protein synthesis initiation begins. The protein is Translation initiation factor IF-3 of Prochlorococcus marinus (strain MIT 9313).